The sequence spans 186 residues: Transcriptional repressor NrdR (186 aa).

A disordered region spans residues methionine 1–alanine 24. The segment at cysteine 3–cysteine 34 is a zinc-finger region. Basic and acidic residues predominate over residues glutamine 12–alanine 24. In terms of domain architecture, ATP-cone spans leucine 49–aspartate 139. The tract at residues arginine 146 to alanine 186 is disordered.

The protein belongs to the NrdR family. Requires Zn(2+) as cofactor.

Negatively regulates transcription of bacterial ribonucleotide reductase nrd genes and operons by binding to NrdR-boxes. The polypeptide is Transcriptional repressor NrdR (Methylobacterium sp. (strain 4-46)).